A 124-amino-acid chain; its full sequence is MAEELRRFLYKKLTSVDELHAIVVSDRDGVPVIKVANENAPEHALRPAFLSTFALATDQGSKLGLSKNKSIICYYSTYQVVQFNQLPLVVSFIASCNANTGLILSLEEELGSLFKELRQVVEIS.

It belongs to the LAMTOR3 family. As to quaternary structure, part of the Ragulator complex composed of lamtor1, lamtor2, lamtor3, lamtor4 and lamtor5. The Ragulator complex interacts with slc38a9; the probable amino acid sensor. Component of the lysosomal folliculin complex (LFC).

Its subcellular location is the late endosome membrane. In terms of biological role, as part of the Ragulator complex it is involved in amino acid sensing and activation of mTORC1, a signaling complex promoting cell growth in response to growth factors, energy levels, and amino acids. Activated by amino acids through a mechanism involving the lysosomal V-ATPase, the Ragulator plays a dual role for the small GTPases Rag (RagA/RRAGA, RagB/RRAGB, RagC/RRAGC and/or RagD/RRAGD): it (1) acts as a guanine nucleotide exchange factor (GEF), activating the small GTPases Rag and (2) mediates recruitment of Rag GTPases to the lysosome membrane. Activated Ragulator and Rag GTPases function as a scaffold recruiting mTORC1 to lysosomes where it is in turn activated. In Xenopus tropicalis (Western clawed frog), this protein is Ragulator complex protein LAMTOR3 (lamtor3).